A 440-amino-acid polypeptide reads, in one-letter code: Ribosomal protein uS12 methylthiotransferase RimO (440 aa).

The MTTase N-terminal domain occupies 2–118 (KKAGIIHLGC…FVSLITSNGE (117 aa)). The [4Fe-4S] cluster site is built by cysteine 11, cysteine 47, cysteine 81, cysteine 154, cysteine 158, and cysteine 161. The region spanning 140 to 370 (ISPNFWVYVK…MSTQKEISKK (231 aa)) is the Radical SAM core domain. A TRAM domain is found at 373 to 440 (AKLLGREFDV…RAYDLLGELV (68 aa)).

This sequence belongs to the methylthiotransferase family. RimO subfamily. The cofactor is [4Fe-4S] cluster.

It is found in the cytoplasm. It carries out the reaction L-aspartate(89)-[ribosomal protein uS12]-hydrogen + (sulfur carrier)-SH + AH2 + 2 S-adenosyl-L-methionine = 3-methylsulfanyl-L-aspartate(89)-[ribosomal protein uS12]-hydrogen + (sulfur carrier)-H + 5'-deoxyadenosine + L-methionine + A + S-adenosyl-L-homocysteine + 2 H(+). Its function is as follows. Catalyzes the methylthiolation of an aspartic acid residue of ribosomal protein uS12. This is Ribosomal protein uS12 methylthiotransferase RimO from Dictyoglomus thermophilum (strain ATCC 35947 / DSM 3960 / H-6-12).